The chain runs to 271 residues: Octanoyltransferase LipM (271 aa).

The BPL/LPL catalytic domain maps to 31–242 (GHNKPTLRFY…GLAEQFNVEF (212 aa)). The Acyl-thioester intermediate role is filled by cysteine 144.

Belongs to the octanoyltransferase LipM family. As to quaternary structure, monomer.

The enzyme catalyses octanoyl-[ACP] + L-lysyl-[protein] = N(6)-octanoyl-L-lysyl-[protein] + holo-[ACP] + H(+). It functions in the pathway protein modification; protein lipoylation via endogenous pathway; protein N(6)-(lipoyl)lysine from octanoyl-[acyl-carrier-protein]. Its function is as follows. Catalyzes the transfer of endogenously produced octanoic acid from octanoyl-acyl-carrier-protein onto the lipoyl domain of GcvH, an intermediate carrier during protein lipoylation. The sequence is that of Octanoyltransferase LipM from Clostridioides difficile (strain 630) (Peptoclostridium difficile).